Here is a 276-residue protein sequence, read N- to C-terminus: Large ribosomal subunit protein uL2 (276 aa).

Positions 221–276 are disordered; it reads RGSAMNPNDHPHGGGEGRAPIGRKSPMTPWGKKARGVKTRDRKKASNALIIRRRKK. A compositionally biased stretch (basic residues) spans 252 to 276; the sequence is KKARGVKTRDRKKASNALIIRRRKK.

This sequence belongs to the universal ribosomal protein uL2 family. In terms of assembly, part of the 50S ribosomal subunit. Forms a bridge to the 30S subunit in the 70S ribosome.

In terms of biological role, one of the primary rRNA binding proteins. Required for association of the 30S and 50S subunits to form the 70S ribosome, for tRNA binding and peptide bond formation. It has been suggested to have peptidyltransferase activity; this is somewhat controversial. Makes several contacts with the 16S rRNA in the 70S ribosome. The polypeptide is Large ribosomal subunit protein uL2 (Aster yellows witches'-broom phytoplasma (strain AYWB)).